The chain runs to 672 residues: Zinc finger protein 271 (672 aa).

The disordered stretch occupies residues 1–29 (MEIQFNYESQEHHLLSDGENKTKIGKPAS). The span at 9 to 22 (SQEHHLLSDGENKT) shows a compositional bias: basic and acidic residues. A C2H2-type 1; degenerate zinc finger spans residues 80-102 (HNCDEYGQSFVWNTGLFRHRKTH). C2H2-type zinc fingers lie at residues 107–129 (YECD…QRIH), 135–157 (YSCN…QRVH), 163–185 (YKCD…QRIH), 191–213 (YQCS…QRIH), 219–241 (YTCN…QRIH), 247–269 (YKCD…QRIH), 275–297 (YPCN…RRIH), 303–325 (YKCN…QRIH), 331–353 (YPCD…QRIH), 359–381 (YPCN…HRIH), 387–409 (YECD…QRIH), 415–437 (YPCS…QRIH), 443–465 (YACN…QRVH), 471–493 (YHCN…QRIH), 499–521 (YLCT…QRIH), 527–549 (YKCS…QRIH), 555–577 (NPCN…QKIH), 583–605 (YKCD…QKIH), and 611–633 (YRCV…EEVH).

Belongs to the krueppel C2H2-type zinc-finger protein family.

The protein resides in the nucleus. May be involved in transcriptional regulation. This Pongo abelii (Sumatran orangutan) protein is Zinc finger protein 271 (ZNF271).